Here is a 541-residue protein sequence, read N- to C-terminus: MAKLVECVPNFSEGCNKEVIEALGRAISQTPGCTLLDVDAGASTNRTVYTFVGTPEAVVEGALSAARMAWELIDMSRHKGEHPRMGALDVCPFVPVMNISMEECVICAHVFGQRLSEELGVPVYLYGEAARQESRRTLPAIRAGEYEALPKKLEKPEWVPDFGPPAFVPQWGATVTGARTFLIAYNINLLCTKELAHRIALNIREQGRGADQPGSLKKVQGIGWYLEEENIAQVSTNLLDFETTPLHAVYEEVCYNAEALKLPVVGSQLVGLVPKKAMLDAAEFYIKKEKLFILEEEHKIKLVVSRLGLDSLSPFNPRERIIEYLVQAGQEDKGLVTKPLGAFVRAVGGRSAAPGGGSVAATAASLGAALGCMVGLMSYGKRQFEQLDSIMRNVIPPLHQAMDELVAMVDADSRAFSSYMEAMKLPKSTPEERERRVVAMQQGLKTAVEVPCTLAVKVNNLWSSLKMLAHHGNLACKSDLQVGAKMLEAAVFGAYFNVMINLKDITDEKFKTETSQMVTRLLEEAKQGSALVLALLEKREA.

Residues 1–181 (MAKLVECVPN…GATVTGARTF (181 aa)) form a formiminotransferase N-subdomain region. H82 acts as the For formimidoyltransferase activity in catalysis. 163-172 (GPPAFVPQWG) contributes to the folate binding site. The segment at 182 to 326 (LIAYNINLLC…PRERIIEYLV (145 aa)) is formiminotransferase C-subdomain. The interval 327 to 334 (QAGQEDKG) is linker. Residues 335 to 541 (LVTKPLGAFV…VLALLEKREA (207 aa)) form a cyclodeaminase/cyclohydrolase region. D412 acts as the For cyclodeaminase activity in catalysis.

This sequence in the C-terminal section; belongs to the cyclodeaminase/cyclohydrolase family. In the N-terminal section; belongs to the formiminotransferase family. As to quaternary structure, homooctamer, including four polyglutamate binding sites. The subunits are arranged as a tetramer of dimers, and form a planar ring-shaped structure.

The protein localises to the cytoplasm. It localises to the cytosol. It is found in the golgi apparatus. Its subcellular location is the cytoskeleton. The protein resides in the microtubule organizing center. The protein localises to the centrosome. It localises to the centriole. The enzyme catalyses 5-formimidoyltetrahydrofolate + L-glutamate = N-formimidoyl-L-glutamate + (6S)-5,6,7,8-tetrahydrofolate. It carries out the reaction 5-formimidoyltetrahydrofolate + 2 H(+) = (6R)-5,10-methenyltetrahydrofolate + NH4(+). It participates in amino-acid degradation; L-histidine degradation into L-glutamate; L-glutamate from N-formimidoyl-L-glutamate (transferase route): step 1/1. Folate-dependent enzyme, that displays both transferase and deaminase activity. Serves to channel one-carbon units from formiminoglutamate to the folate pool. Its function is as follows. Binds and promotes bundling of vimentin filaments originating from the Golgi. The sequence is that of Formimidoyltransferase-cyclodeaminase (FTCD) from Gallus gallus (Chicken).